Consider the following 145-residue polypeptide: Ribonuclease H (145 aa).

The RNase H type-1 domain maps to 1-142; sequence MDTPVYLYTD…ADDLANRGAA (142 aa). Mg(2+)-binding residues include D10, E48, D70, and D134.

The protein belongs to the RNase H family. Monomer. Requires Mg(2+) as cofactor.

It is found in the cytoplasm. It carries out the reaction Endonucleolytic cleavage to 5'-phosphomonoester.. In terms of biological role, endonuclease that specifically degrades the RNA of RNA-DNA hybrids. This is Ribonuclease H from Neisseria gonorrhoeae (strain ATCC 700825 / FA 1090).